The chain runs to 852 residues: Serine/threonine-protein phosphatase 6 regulatory subunit 3-A (852 aa).

Disordered regions lie at residues Asn610–Glu653, Asn714–Ser742, and Asp817–Val852. Residues Asp627–Glu638 are compositionally biased toward acidic residues. A compositionally biased stretch (polar residues) spans Asn714–Glu732. The span at Pro828 to Gln840 shows a compositional bias: low complexity.

This sequence belongs to the SAPS family.

In terms of biological role, regulatory subunit of protein phosphatase 6 (PP6). May function as a scaffolding PP6 subunit. This chain is Serine/threonine-protein phosphatase 6 regulatory subunit 3-A (ppp6r3-a), found in Xenopus laevis (African clawed frog).